A 318-amino-acid polypeptide reads, in one-letter code: tRNA uridine(34) hydroxylase (318 aa).

The region spanning 123-217 (EDDDTVIIDA…YGKDPETKGE (95 aa)) is the Rhodanese domain. Cysteine 177 (cysteine persulfide intermediate) is an active-site residue.

The protein belongs to the TrhO family.

It catalyses the reaction uridine(34) in tRNA + AH2 + O2 = 5-hydroxyuridine(34) in tRNA + A + H2O. Functionally, catalyzes oxygen-dependent 5-hydroxyuridine (ho5U) modification at position 34 in tRNAs. The sequence is that of tRNA uridine(34) hydroxylase from Staphylococcus aureus (strain USA300).